The sequence spans 180 residues: Large ribosomal subunit protein uL10 (180 aa).

This sequence belongs to the universal ribosomal protein uL10 family. Part of the ribosomal stalk of the 50S ribosomal subunit. The N-terminus interacts with L11 and the large rRNA to form the base of the stalk. The C-terminus forms an elongated spine to which L12 dimers bind in a sequential fashion forming a multimeric L10(L12)X complex.

Functionally, forms part of the ribosomal stalk, playing a central role in the interaction of the ribosome with GTP-bound translation factors. The sequence is that of Large ribosomal subunit protein uL10 (rplJ) from Treponema pallidum (strain Nichols).